Reading from the N-terminus, the 723-residue chain is Host cell factor 2 (723 aa).

4 Kelch repeats span residues L34–C79, R83–H130, K207–N255, and M257–E305. Fibronectin type-III domains are found at residues P357 to T436, T516 to P606, and F608 to A720. Positions A398–N472 are disordered. Over residues Q419–A433 the composition is skewed to polar residues.

In terms of assembly, binds KMT2A/MLL1. Component of the MLL1/MLL complex, at least composed of KMT2A/MLL1, ASH2L, RBBP5, DPY30, WDR5, MEN1, HCFC1 and HCFC2. Interacts with TASOR.

The protein resides in the cytoplasm. It is found in the nucleus. This chain is Host cell factor 2 (Hcfc2), found in Rattus norvegicus (Rat).